Consider the following 455-residue polypeptide: Rhodopsin (455 aa).

Residues 1–34 (MVESTTLVNQTWWYNPTVDIHPHWAKFDPIPDAV) are Extracellular-facing. An N-linked (GlcNAc...) asparagine glycan is attached at Asn9. The helical transmembrane segment at 35–59 (YYSVGIFIGVVGIIGILGNGVVIYL) threads the bilayer. The Cytoplasmic segment spans residues 60 to 71 (FSKTKSLQTPAN). Residues 72 to 98 (MFIINLAMSDLSFSAINGFPLKTISAF) form a helical membrane-spanning segment. The Extracellular portion of the chain corresponds to 99 to 110 (MKKWIFGKVACQ). A disulfide bridge links Cys109 with Cys187. A helical transmembrane segment spans residues 111–132 (LYGLLGGIFGFMSINTMAMISI). The 'Ionic lock' involved in activated form stabilization motif lies at 133–135 (DRY). The Cytoplasmic segment spans residues 133 to 152 (DRYNVIGRPMAASKKMSHRR). The chain crosses the membrane as a helical span at residues 153 to 173 (AFLMIIFVWMWSIVWSVGPVF). Over 174–200 (NWGAYVPEGILTSCSFDYLSTDPSTRS) the chain is Extracellular. A helical transmembrane segment spans residues 201–225 (FILCMYFCGFMLPIIIIAFCYFNIV). The Cytoplasmic segment spans residues 226-262 (MSVSNHEKEMAAMAKRLNAKELRKAQAGASAEMKLAK). A helical transmembrane segment spans residues 263–284 (ISMVIITQFMLSWSPYAIIALL). The Extracellular segment spans residues 285–294 (AQFGPAEWVT). Residues 295 to 316 (PYAAELPVLFAKASAIHNPIVY) form a helical membrane-spanning segment. Lys306 is subject to N6-(retinylidene)lysine. The Cytoplasmic segment spans residues 317-455 (SVSHPKFREA…QGVDNQAYQA (139 aa)). Residues Cys337 and Cys338 are each lipidated (S-palmitoyl cysteine). The segment covering 378-387 (QKMQAQQAAY) has biased composition (low complexity). The interval 378 to 455 (QKMQAQQAAY…QGVDNQAYQA (78 aa)) is disordered. The span at 388–433 (QPPPPPQGYPPQGYPPQGAYPPPQGYPPQGYPPQGYPPQGYPPQGA) shows a compositional bias: pro residues. 6 tandem repeats follow at residues 395-399 (GYPPQ), 400-404 (GYPPQ), 412-416 (GYPPQ), 417-421 (GYPPQ), 422-426 (GYPPQ), and 427-431 (GYPPQ). The 6 X 5 AA repeats of G-Y-P-P-Q stretch occupies residues 395 to 431 (GYPPQGYPPQGAYPPPQGYPPQGYPPQGYPPQGYPPQ).

This sequence belongs to the G-protein coupled receptor 1 family. Opsin subfamily. Post-translationally, contains one covalently linked retinal chromophore. Upon light absorption, the covalently bound 11-cis-retinal is converted to all-trans-retinal. After hydrolysis of the Schiff base and release of the covalently bound all-trans-retinal, active rhodopsin is regenerated by binding of a fresh molecule of 11-cis-retinal.

It is found in the cell projection. It localises to the rhabdomere membrane. Functionally, photoreceptor required for image-forming vision at low light intensity. Light-induced isomerization of 11-cis to all-trans retinal triggers a conformational change that activates signaling via G-proteins. Signaling mediates the activation of phospholipase C. Subsequent receptor phosphorylation mediates displacement of the bound G-protein alpha subunit by arrestin and terminates signaling. The polypeptide is Rhodopsin (RHO) (Enteroctopus dofleini (North Pacific giant octopus)).